The primary structure comprises 304 residues: Ribosomal RNA large subunit methyltransferase F (304 aa).

It belongs to the methyltransferase superfamily. METTL16/RlmF family.

The protein resides in the cytoplasm. It catalyses the reaction adenosine(1618) in 23S rRNA + S-adenosyl-L-methionine = N(6)-methyladenosine(1618) in 23S rRNA + S-adenosyl-L-homocysteine + H(+). Functionally, specifically methylates the adenine in position 1618 of 23S rRNA. The chain is Ribosomal RNA large subunit methyltransferase F from Klebsiella pneumoniae subsp. pneumoniae (strain ATCC 700721 / MGH 78578).